A 205-amino-acid chain; its full sequence is GTP cyclohydrolase-2 (205 aa).

49–53 (RVHSE) contacts GTP. Zn(2+)-binding residues include Cys54, Cys65, and Cys67. Residues Gln70, 92 to 94 (EGR), and Thr114 contribute to the GTP site. Asp126 serves as the catalytic Proton acceptor. Arg128 acts as the Nucleophile in catalysis. Residues Thr149 and Lys154 each coordinate GTP.

This sequence belongs to the GTP cyclohydrolase II family. It depends on Zn(2+) as a cofactor.

It carries out the reaction GTP + 4 H2O = 2,5-diamino-6-hydroxy-4-(5-phosphoribosylamino)-pyrimidine + formate + 2 phosphate + 3 H(+). Its pathway is cofactor biosynthesis; riboflavin biosynthesis; 5-amino-6-(D-ribitylamino)uracil from GTP: step 1/4. Its function is as follows. Catalyzes the conversion of GTP to 2,5-diamino-6-ribosylamino-4(3H)-pyrimidinone 5'-phosphate (DARP), formate and pyrophosphate. The protein is GTP cyclohydrolase-2 of Pseudomonas syringae pv. tomato (strain ATCC BAA-871 / DC3000).